Consider the following 204-residue polypeptide: Ribonuclease HII (204 aa).

The RNase H type-2 domain maps to 14-204 (QYICGVDEVG…SFKLSCLGEK (191 aa)). A divalent metal cation contacts are provided by Asp-20, Glu-21, and Asp-116.

This sequence belongs to the RNase HII family. Requires Mn(2+) as cofactor. Mg(2+) serves as cofactor.

The protein localises to the cytoplasm. The catalysed reaction is Endonucleolytic cleavage to 5'-phosphomonoester.. Endonuclease that specifically degrades the RNA of RNA-DNA hybrids. This Chloroherpeton thalassium (strain ATCC 35110 / GB-78) protein is Ribonuclease HII.